Here is a 105-residue protein sequence, read N- to C-terminus: Large ribosomal subunit protein bL21 (105 aa).

The protein belongs to the bacterial ribosomal protein bL21 family. Part of the 50S ribosomal subunit. Contacts protein L20.

In terms of biological role, this protein binds to 23S rRNA in the presence of protein L20. The chain is Large ribosomal subunit protein bL21 from Rickettsia prowazekii (strain Madrid E).